We begin with the raw amino-acid sequence, 86 residues long: Large ribosomal subunit protein bL31B (86 aa).

This sequence belongs to the bacterial ribosomal protein bL31 family. Type B subfamily. Part of the 50S ribosomal subunit.

The chain is Large ribosomal subunit protein bL31B from Cupriavidus pinatubonensis (strain JMP 134 / LMG 1197) (Cupriavidus necator (strain JMP 134)).